A 763-amino-acid polypeptide reads, in one-letter code: uncharacterized protein (763 aa).

Residues 380–607 (DSVLNPFNTN…YNIKVITMRL (228 aa)) form the TR mART core domain. The chain crosses the membrane as a helical span at residues 684 to 700 (SYVSIYALLCPLLTNIY).

Its subcellular location is the membrane. This is an uncharacterized protein from Acanthamoeba polyphaga mimivirus (APMV).